A 516-amino-acid chain; its full sequence is 3-phosphoshikimate 1-carboxyvinyltransferase, chloroplastic (516 aa).

The transit peptide at 1–72 directs the protein to the chloroplast; that stretch reads MAQSSRICHG…KVTASVSTSE (72 aa). 3-phosphoshikimate contacts are provided by Lys-95, Ser-96, and Arg-100. Phosphoenolpyruvate is bound at residue Lys-95. Residues Gly-173 and Arg-203 each coordinate phosphoenolpyruvate. 3-phosphoshikimate contacts are provided by Ser-250, Ser-251, Gln-252, Ser-278, Asp-403, and Lys-430. Gln-252 contributes to the phosphoenolpyruvate binding site. Residue Asp-403 is the Proton acceptor of the active site. Phosphoenolpyruvate is bound by residues Arg-434, Arg-476, and Lys-501.

This sequence belongs to the EPSP synthase family.

It localises to the plastid. The protein resides in the chloroplast. It carries out the reaction 3-phosphoshikimate + phosphoenolpyruvate = 5-O-(1-carboxyvinyl)-3-phosphoshikimate + phosphate. It participates in metabolic intermediate biosynthesis; chorismate biosynthesis; chorismate from D-erythrose 4-phosphate and phosphoenolpyruvate: step 6/7. Catalyzes the transfer of the enolpyruvyl moiety of phosphoenolpyruvate (PEP) to the 5-hydroxyl of shikimate-3-phosphate (S3P) to produce enolpyruvyl shikimate-3-phosphate and inorganic phosphate. This is 3-phosphoshikimate 1-carboxyvinyltransferase, chloroplastic from Brassica napus (Rape).